A 293-amino-acid chain; its full sequence is MESTSGERSENIHEDQGIPKVILPADFNKCSRTDLVVLISRMLVSLIAINENSATKKSDDQITLTRYHSKIPPNISIFNYFIRLTKFSSLEHCVLMTSLYYIDLLQTVYPDFTLNSLTAHRFLLTATTVATKGLCDSFSTNAHYAKVGGVRCHELNILENDFLKRVNYRIIPRDHNITLCSIEQKQKKFVIDKNALGSLDLDSYSYVNRPKSGYNVLDKYYRRIVQLVGSFNASPDKSRKVDYVLPPNIDIVSESGSQTTQLKGSSSPNSHSSQKRYSEAKDAHIYNKRSKPD.

Phosphoserine; by PHO85 occurs at positions 234 and 267. The segment covering Glu254–Ser272 has biased composition (polar residues). A disordered region spans residues Glu254–Asp293. A compositionally biased stretch (basic and acidic residues) spans Arg276 to Asp293.

Belongs to the cyclin family. PHO80 subfamily. In terms of assembly, forms a cyclin-CDK complex with PHO85. PHO80-PHO85 forms a stable complex with its inhibitor PHO81 under both high- and low-phosphate conditions, but PHO81 only inhibits the kinase upon phosphate starvation. Interacts with transcription factor PHO4. Phosphorylation of Ser-267 by PHO85 is required to form an active cyclin-kinase complex and for function.

It localises to the cytoplasm. It is found in the nucleus. Its activity is regulated as follows. Inhibited by the CDK inhibitor (CKI) PHO81 in response to phosphate starvation. In terms of biological role, cyclin partner of the cyclin-dependent kinase (CDK) PHO85. Negatively regulates the expression of phosphate-starvation-responsive genes under phosphate-rich conditions. The PHO80-PHO85 cyclin-CDK holoenzyme phosphorylates and inactivates the transcription factor PHO4, by preventing its association with the transcription factor PHO2 and the nuclear import receptor PSE1, and by promoting association with the nuclear export receptor MSN5, excluding PHO4 from the nucleus. PHO80-PHO85 phosphorylates and inactivates protein kinase RIM15 by retaining it in the cytoplasm, antagonizing RIM15-induced entry into stationary phase. PHO80-PHO85 also phosphorylates and inactivates the calcineurin-responsive transcription factor CRZ1, linking PHO85 to calcium signaling. The chain is PHO85 cyclin PHO80 (PHO80) from Saccharomyces cerevisiae (strain ATCC 204508 / S288c) (Baker's yeast).